Here is a 258-residue protein sequence, read N- to C-terminus: Sec-independent protein translocase protein TatC (258 aa).

The Cytoplasmic portion of the chain corresponds to 2-23 (SVEDTQPLITHLIELRKRLLNC). Residues 24–44 (IISVIVIFLCLVYFANDIYHL) traverse the membrane as a helical segment. Residues 45-75 (VSAPLIKQLPQGSTMIATDVASPFFTPIKLT) lie on the Periplasmic side of the membrane. Residues 76 to 96 (FMVSLILSAPVILYQVWAFIA) form a helical membrane-spanning segment. Residues 97–115 (PALYKHERRLVVPLLVSSS) lie on the Cytoplasmic side of the membrane. Residues 116-136 (LLFYIGMAFAYFVVFPLAFGF) traverse the membrane as a helical segment. The Periplasmic portion of the chain corresponds to 137–156 (LANTAPEGVQVSTDIASYLS). The chain crosses the membrane as a helical span at residues 157–177 (FVMALFMAFGVSFEVPVAIVL). Over 178-192 (LCWMGITSPEDLRKK) the chain is Cytoplasmic. The chain crosses the membrane as a helical span at residues 193–210 (RPYVLVGAFVVGMLLTPP). Residue D211 is a topological domain, periplasmic. The helical transmembrane segment at 212–232 (VFSQTLLAIPMYCLFEIGVFF) threads the bilayer. The Cytoplasmic segment spans residues 233–258 (SRFYVGKGRNREEENDAEAESEKTEE).

Belongs to the TatC family. As to quaternary structure, the Tat system comprises two distinct complexes: a TatABC complex, containing multiple copies of TatA, TatB and TatC subunits, and a separate TatA complex, containing only TatA subunits. Substrates initially bind to the TatABC complex, which probably triggers association of the separate TatA complex to form the active translocon.

The protein resides in the cell inner membrane. Its function is as follows. Part of the twin-arginine translocation (Tat) system that transports large folded proteins containing a characteristic twin-arginine motif in their signal peptide across membranes. Together with TatB, TatC is part of a receptor directly interacting with Tat signal peptides. The protein is Sec-independent protein translocase protein TatC of Escherichia coli O6:H1 (strain CFT073 / ATCC 700928 / UPEC).